The primary structure comprises 138 residues: uncharacterized protein (138 aa).

3 helical membrane passes run 17 to 37, 43 to 63, and 117 to 137; these read IVVS…TIYF, FTVV…LLVC, and FWWM…LVSL.

It localises to the cell membrane. This is an uncharacterized protein from Mycoplasma genitalium (strain ATCC 33530 / DSM 19775 / NCTC 10195 / G37) (Mycoplasmoides genitalium).